The chain runs to 233 residues: Adapter protein MecA (233 aa).

It belongs to the MecA family. Homodimer.

In terms of biological role, enables the recognition and targeting of unfolded and aggregated proteins to the ClpC protease or to other proteins involved in proteolysis. In Lactococcus lactis subsp. lactis (strain IL1403) (Streptococcus lactis), this protein is Adapter protein MecA.